The following is a 219-amino-acid chain: Claudin-3 (219 aa).

At Met-1–Thr-8 the chain is on the cytoplasmic side. Residues Gly-9–Trp-29 traverse the membrane as a helical segment. At Arg-30 to Arg-80 the chain is on the extracellular side. The chain crosses the membrane as a helical span at residues Ala-81–Ala-101. Over Gln-102–Lys-115 the chain is Cytoplasmic. The chain crosses the membrane as a helical span at residues Ile-116–Ser-136. Over Trp-137–Met-159 the chain is Extracellular. A helical transmembrane segment spans residues Gly-160–Leu-180. The Cytoplasmic segment spans residues Cys-181 to Val-219. A Phosphotyrosine modification is found at Tyr-197. Ser-198 is subject to Phosphoserine. The interval Tyr-218 to Val-219 is interactions with TJP1, TJP2 and TJP3.

Belongs to the claudin family. Can form homo- and heteropolymers with other CLDN. Homopolymers interact with CLDN1 and CLDN2 homopolymers. Interacts in cis (within the same plasma membrane) with CLDN19. Directly interacts with TJP1/ZO-1, TJP2/ZO-2 and TJP3/ZO-3. As to quaternary structure, (Microbial infection) Interacts with Clostridium perfringens enterotoxin CPE; the interaction may disrupt claudin assembly in tight junctions. Expressed in the lung. Expressed at high levels in the liver and at lower levels, in kidney and testis.

The protein localises to the cell junction. It localises to the tight junction. Its subcellular location is the cell membrane. Plays a major role in tight junction-specific obliteration of the intercellular space, through calcium-independent cell-adhesion activity. The chain is Claudin-3 (Cldn3) from Mus musculus (Mouse).